Reading from the N-terminus, the 422-residue chain is Ubiquitin-conjugating enzyme E2 Q1 (422 aa).

Met1 is subject to N-acetylmethionine. Residues 1–24 (MQQPQPQGQQQPGPGQQLGVQGAA) show a composition bias toward low complexity. Disordered stretches follow at residues 1–40 (MQQP…PGPC) and 173–221 (QPLP…EDDG). Residues 25–35 (PGAGGGPGGGP) show a composition bias toward gly residues. Positions 185-200 (VSSEDEDEEMPEDTED) are enriched in acidic residues. A compositionally biased stretch (basic and acidic residues) spans 212 to 221 (AEGKKSEDDG). One can recognise a UBC core domain in the interval 251-415 (QATDRLMKEL…VQIHEKNGWY (165 aa)). The Glycyl thioester intermediate role is filled by Cys351.

Belongs to the ubiquitin-conjugating enzyme family. Monomer and homodimer. Only the homodimer is linked to ubiquitin through thiolester activation. Interacts (via N-terminus) with B4GALT1 (via N-terminal cytoplasmic domain); the interaction is direct. In terms of processing, autoubiquitinated in vitro in the presence of NEDD4L. As to expression, expressed in liver, brain, heart, spleen, lung, kidney, muscle, ovary, epididymis, testis and placenta. Also expressed in thymus and ES cells. Only expressed in the uterus during pregnancy. Expressed in oocytes and during subsequent embryonic development stages (4-cell stage, blastocyst, 8.5 dpc, 13.5 dpc, 16.5 dpc and 18.5 dpc).

Its subcellular location is the nucleus. It is found in the cell projection. The protein resides in the filopodium. The protein localises to the cytoplasm. It localises to the cytosol. It carries out the reaction S-ubiquitinyl-[E1 ubiquitin-activating enzyme]-L-cysteine + [E2 ubiquitin-conjugating enzyme]-L-cysteine = [E1 ubiquitin-activating enzyme]-L-cysteine + S-ubiquitinyl-[E2 ubiquitin-conjugating enzyme]-L-cysteine.. It functions in the pathway protein modification; protein ubiquitination. Functionally, catalyzes the covalent attachment of ubiquitin to other proteins. Involved in female fertility and embryo implantation. May be involved in hormonal homeostasis in females. Involved in regulation of B4GALT1 cell surface expression, B4GALT1-mediated cell adhesion to laminin and embryoid body formation. This Mus musculus (Mouse) protein is Ubiquitin-conjugating enzyme E2 Q1 (Ube2q1).